Consider the following 51-residue polypeptide: MARNKPLAKKLRLAKAMKQNRRVPVWVIVRTNRRVLTHPKRRHWRRTKLKE.

The protein belongs to the eukaryotic ribosomal protein eL39 family.

In Pyrococcus horikoshii (strain ATCC 700860 / DSM 12428 / JCM 9974 / NBRC 100139 / OT-3), this protein is Large ribosomal subunit protein eL39 (rpl39e).